A 231-amino-acid chain; its full sequence is Large ribosomal subunit protein uL1 (231 aa).

Belongs to the universal ribosomal protein uL1 family. Part of the 50S ribosomal subunit.

Functionally, binds directly to 23S rRNA. The L1 stalk is quite mobile in the ribosome, and is involved in E site tRNA release. Its function is as follows. Protein L1 is also a translational repressor protein, it controls the translation of the L11 operon by binding to its mRNA. In Teredinibacter turnerae (strain ATCC 39867 / T7901), this protein is Large ribosomal subunit protein uL1.